A 188-amino-acid chain; its full sequence is Elongation factor P (188 aa).

It belongs to the elongation factor P family.

The protein localises to the cytoplasm. It functions in the pathway protein biosynthesis; polypeptide chain elongation. In terms of biological role, involved in peptide bond synthesis. Stimulates efficient translation and peptide-bond synthesis on native or reconstituted 70S ribosomes in vitro. Probably functions indirectly by altering the affinity of the ribosome for aminoacyl-tRNA, thus increasing their reactivity as acceptors for peptidyl transferase. The sequence is that of Elongation factor P from Parabacteroides distasonis (strain ATCC 8503 / DSM 20701 / CIP 104284 / JCM 5825 / NCTC 11152).